We begin with the raw amino-acid sequence, 157 residues long: Iron-sulfur cluster repair protein DnrN (157 aa).

It belongs to the RIC family.

The protein resides in the cytoplasm. Di-iron-containing protein involved in the repair of iron-sulfur clusters damaged by oxidative and nitrosative stress conditions. Required to repair damage caused by nitric oxide to FNR and NsrR transcription factors. The protein is Iron-sulfur cluster repair protein DnrN (dnrN) of Neisseria gonorrhoeae.